Here is a 175-residue protein sequence, read N- to C-terminus: Large ribosomal subunit protein uL10 (175 aa).

This sequence belongs to the universal ribosomal protein uL10 family. Part of the ribosomal stalk of the 50S ribosomal subunit. The N-terminus interacts with L11 and the large rRNA to form the base of the stalk. The C-terminus forms an elongated spine to which L12 dimers bind in a sequential fashion forming a multimeric L10(L12)X complex.

Forms part of the ribosomal stalk, playing a central role in the interaction of the ribosome with GTP-bound translation factors. The protein is Large ribosomal subunit protein uL10 of Prochlorococcus marinus (strain MIT 9215).